Consider the following 251-residue polypeptide: Flap endonuclease Xni (251 aa).

Residue aspartate 104 coordinates Mg(2+). The 5'-3' exonuclease domain occupies 160 to 249; that stretch reads VQPQQLPDYW…IDGNLQQLRL (90 aa). Residues leucine 171, alanine 172, proline 180, valine 182, and isoleucine 185 each contribute to the K(+) site. The interval 184-189 is interaction with DNA; the sequence is GIGPKS.

The protein belongs to the Xni family. The cofactor is Mg(2+). It depends on K(+) as a cofactor.

Has flap endonuclease activity. During DNA replication, flap endonucleases cleave the 5'-overhanging flap structure that is generated by displacement synthesis when DNA polymerase encounters the 5'-end of a downstream Okazaki fragment. The protein is Flap endonuclease Xni of Escherichia coli O17:K52:H18 (strain UMN026 / ExPEC).